Reading from the N-terminus, the 1280-residue chain is Papilin (1280 aa).

The first 20 residues, 1–20 (MQLFPLLFSLLLTSTPGSWA), serve as a signal peptide directing secretion. TSP type-1 domains are found at residues 27-81 (SDTW…ESCP), 305-362 (RGFS…QPCP), 363-422 (KTKR…ACNL), 424-482 (HCAV…EACP), and 485-540 (RGQA…QPCH). Disulfide bonds link Cys-39-Cys-75, Cys-43-Cys-80, and Cys-54-Cys-65. Intrachain disulfides connect Cys-425–Cys-464, Cys-436–Cys-476, and Cys-440–Cys-481. 2 disordered regions span residues 541-626 (LPQE…DCRH) and 672-715 (PQQA…PSEC). Over residues 585-599 (AQSNPREGQDPNLSS) the composition is skewed to polar residues. The span at 706 to 715 (QAHEGEPSEC) shows a compositional bias: basic and acidic residues. Intrachain disulfides connect Cys-750-Cys-800, Cys-759-Cys-783, and Cys-775-Cys-796. The region spanning 750 to 800 (CLLPSAQGSCGDWAARWYFVASVGRCNRFWYGGCHGNANNFASEQECMNTC) is the BPTI/Kunitz inhibitor domain. Residues 800–902 (CRGQHGPRRP…AVPPTHSPSY (103 aa)) form a disordered region. The span at 879–891 (IRPRVPGLDREAR) shows a compositional bias: basic and acidic residues. The Ig-like C2-type 1 domain occupies 900–990 (PSYRIRLAGS…EPQEIQLRVT (91 aa)). A disulfide bridge links Cys-926 with Cys-973. Over residues 1002-1012 (PRHFPEPRNPD) the composition is skewed to basic and acidic residues. The segment at 1002–1042 (PRHFPEPRNPDLGHGPPHRGTGAEAGGHRVLSPSHPRPATR) is disordered. 2 Ig-like C2-type domains span residues 1039-1128 (PATR…VQLR) and 1133-1218 (LTIT…TEVK). 2 disulfide bridges follow: Cys-1065/Cys-1112 and Cys-1154/Cys-1202. Positions 1231–1270 (LGKDCIDQPELANCALILQAQLCGNEYYSSFCCASCSRFQ) constitute a PLAC domain.

It belongs to the papilin family.

The protein localises to the secreted. This chain is Papilin (Papln), found in Mus musculus (Mouse).